We begin with the raw amino-acid sequence, 533 residues long: DELLA protein 2 (533 aa).

Positions 1 to 12 (MKREHKLEHEDM) are enriched in basic and acidic residues. A disordered region spans residues 1-24 (MKREHKLEHEDMSSGSGKSGVCWE). A DELLA motif motif is present at residues 31-35 (DELLA). The 366-residue stretch at 157 to 522 (VETQEKGIRL…RPLIATSAWK (366 aa)) folds into the GRAS domain. Residues 164-218 (IRLVHSLMACAEAVEQNNLKMAEALVKQIGYLAVSQEGAMRKVATYFAEGLARRI) form a leucine repeat I (LRI) region. Residues 166-203 (LVHSLMACAEAVEQNNLKMAEALVKQIGYLAVSQEGAM) are required for possible homodimerization. The short motif at 171 to 175 (MACAE) is the LxCxE motif; degenerate element. Residues 232-297 (QIHFYETCPN…GGPPAFRLTG (66 aa)) form a VHIID region. A VHIID motif is present at residues 263–267 (VHVID). A leucine repeat II (LRII) region spans residues 311–343 (QVGWRLAQFAQTIHVQFEYRGFVANSLADLDAS). Residues 355-443 (VAVNSVFELH…EVYLGKQICN (89 aa)) are PFYRE. Residues 363 to 367 (LHKLN) carry the LXXLL motif; degenerate motif. Positions 446–522 (ACEGTDRVER…RPLIATSAWK (77 aa)) are SAW.

It belongs to the GRAS family. DELLA subfamily. In terms of assembly, may be a homodimer. In terms of processing, ubiquitinated. Upon GA application it is ubiquitinated, leading to its subsequent degradation.

It localises to the nucleus. Probable transcriptional regulator that acts as a repressor of the gibberellin (GA) signaling pathway. Probably acts by participating in large multiprotein complexes that repress transcription of GA-inducible genes. Upon GA application, it is degraded by the proteasome, allowing the GA signaling pathway. Together with DELLA1, required to enable arbuscule development during arbuscular mycorrhizal (AM) symbiosis with AM fungi (e.g. Glomus versiforme) via the regulation of RAM1 which, in turn, regulates various AM genes (e.g. NSP1, NSP2, PT4, LEC5, RAM2, EXO70I, STR and RAD1). This is DELLA protein 2 from Medicago truncatula (Barrel medic).